Reading from the N-terminus, the 298-residue chain is MATH domain and coiled-coil domain-containing protein At3g58280 (298 aa).

An MATH domain is found at 9 to 128; the sequence is KKTFGWVIKD…NGEITIIAEV (120 aa). Residues 240–288 are a coiled coil; sequence NLDWLRQKFDQALEKQIAYDTRIGELEKQVKKRKLAVTELEADLEKEKA.

In Arabidopsis thaliana (Mouse-ear cress), this protein is MATH domain and coiled-coil domain-containing protein At3g58280.